The primary structure comprises 592 residues: Arginine--tRNA ligase (592 aa).

Positions 112 to 122 match the 'HIGH' region motif; the sequence is VNPNKELHVGH.

The protein belongs to the class-I aminoacyl-tRNA synthetase family. As to quaternary structure, monomer.

Its subcellular location is the cytoplasm. The catalysed reaction is tRNA(Arg) + L-arginine + ATP = L-arginyl-tRNA(Arg) + AMP + diphosphate. This chain is Arginine--tRNA ligase, found in Thermus thermophilus (strain ATCC BAA-163 / DSM 7039 / HB27).